We begin with the raw amino-acid sequence, 466 residues long: UDP-N-acetylmuramoylalanine--D-glutamate ligase (466 aa).

139 to 145 (GTAGKGG) lines the ATP pocket.

It belongs to the MurCDEF family.

The protein localises to the cytoplasm. The catalysed reaction is UDP-N-acetyl-alpha-D-muramoyl-L-alanine + D-glutamate + ATP = UDP-N-acetyl-alpha-D-muramoyl-L-alanyl-D-glutamate + ADP + phosphate + H(+). It participates in cell wall biogenesis; peptidoglycan biosynthesis. Its function is as follows. Cell wall formation. Catalyzes the addition of glutamate to the nucleotide precursor UDP-N-acetylmuramoyl-L-alanine (UMA). This is UDP-N-acetylmuramoylalanine--D-glutamate ligase from Deinococcus geothermalis (strain DSM 11300 / CIP 105573 / AG-3a).